Consider the following 142-residue polypeptide: Cell division protein SepF (142 aa).

Over residues 21 to 31 (ETTTVEEEREE) the composition is skewed to acidic residues. Positions 21 to 46 (ETTTVEEEREEQESSHKRQPAISRTN) are disordered.

The protein belongs to the SepF family. In terms of assembly, homodimer. Interacts with FtsZ.

Its subcellular location is the cytoplasm. Its function is as follows. Cell division protein that is part of the divisome complex and is recruited early to the Z-ring. Probably stimulates Z-ring formation, perhaps through the cross-linking of FtsZ protofilaments. Its function overlaps with FtsA. This chain is Cell division protein SepF, found in Brevibacillus brevis (strain 47 / JCM 6285 / NBRC 100599).